The sequence spans 378 residues: Zinc transporter 7 (378 aa).

The Cytoplasmic portion of the chain corresponds to 1–37 (MLPLSIKDDEYKPPRLNLFRKMSGWFRSILADKTSRN). Residues 38-58 (LFFFLCLNLSFAFVELLYGVW) form a helical membrane-spanning segment. At 59–67 (SNSLGLISD) the chain is on the lumenal side. A helical membrane pass occupies residues 68–88 (SFHMFFDCTALLAGLAASVIS). The Cytoplasmic portion of the chain corresponds to 89–102 (KWRSNDAFSYGYVR). A helical membrane pass occupies residues 103–123 (AEVLAGFVNGLFLIFTAFFIF). Residues 124 to 140 (SEGVERALEPPDVHHER) are Lumenal-facing. The helical transmembrane segment at 141-161 (LLPVSILGFIVNLIGIFVFQH) threads the bilayer. The tract at residues 161-223 (HGGHGHSHGS…HGQDYCHDDH (63 aa)) is his-rich loop. Residues 162–238 (GGHGHSHGSG…TGSSKQILQG (77 aa)) are Cytoplasmic-facing. The segment at 185 to 214 (HGHSHRGHGHSHEHKHGHTHDHGHSHGLSH) is disordered. Positions 186-211 (GHSHRGHGHSHEHKHGHTHDHGHSHG) are enriched in basic residues. A helical transmembrane segment spans residues 239–259 (VFLHIVADTLGSIGVIISAIL). Over 260-264 (MQNYG) the chain is Lumenal. The chain crosses the membrane as a helical span at residues 265–285 (LMIADPICSMLIALLIGVSIV). At 286 to 378 (PLLKESIGIL…LYIQIDVAAM (93 aa)) the chain is on the cytoplasmic side.

The protein belongs to the cation diffusion facilitator (CDF) transporter (TC 2.A.4) family. SLC30A subfamily. In terms of assembly, homooligomer.

It is found in the golgi apparatus membrane. It localises to the cytoplasmic vesicle. Its subcellular location is the golgi apparatus. The protein resides in the trans-Golgi network. The protein localises to the sarcoplasmic reticulum. It is found in the mitochondrion. It carries out the reaction Zn(2+)(in) = Zn(2+)(out). Functionally, zinc ion transporter mediating zinc entry from the cytosol into the lumen of organelles along the secretory pathway. By contributing to zinc ion homeostasis within the early secretory pathway, regulates the activation and folding of enzymes like alkaline phosphatases. The sequence is that of Zinc transporter 7 (SLC30A7) from Gallus gallus (Chicken).